A 345-amino-acid chain; its full sequence is Nicotinate-nucleotide--dimethylbenzimidazole phosphoribosyltransferase (345 aa).

The Proton acceptor role is filled by Glu-312.

This sequence belongs to the CobT family.

It catalyses the reaction 5,6-dimethylbenzimidazole + nicotinate beta-D-ribonucleotide = alpha-ribazole 5'-phosphate + nicotinate + H(+). It functions in the pathway nucleoside biosynthesis; alpha-ribazole biosynthesis; alpha-ribazole from 5,6-dimethylbenzimidazole: step 1/2. Its function is as follows. Catalyzes the synthesis of alpha-ribazole-5'-phosphate from nicotinate mononucleotide (NAMN) and 5,6-dimethylbenzimidazole (DMB). The sequence is that of Nicotinate-nucleotide--dimethylbenzimidazole phosphoribosyltransferase from Bacteroides fragilis (strain YCH46).